A 344-amino-acid polypeptide reads, in one-letter code: Succinylglutamate desuccinylase (344 aa).

Residues histidine 63, glutamate 66, and histidine 160 each contribute to the Zn(2+) site. Glutamate 224 is a catalytic residue.

Belongs to the AspA/AstE family. Succinylglutamate desuccinylase subfamily. Requires Zn(2+) as cofactor.

It catalyses the reaction N-succinyl-L-glutamate + H2O = L-glutamate + succinate. It participates in amino-acid degradation; L-arginine degradation via AST pathway; L-glutamate and succinate from L-arginine: step 5/5. Transforms N(2)-succinylglutamate into succinate and glutamate. This Shewanella putrefaciens (strain CN-32 / ATCC BAA-453) protein is Succinylglutamate desuccinylase.